The sequence spans 562 residues: Arf-GAP domain and FG repeat-containing protein 1 (562 aa).

Residues 11-135 (EKHLKMLRDM…WYVPPEQAKV (125 aa)) form the Arf-GAP domain. Residues 29–52 (CFDCDQRGPTYVNMTVGSFVCTSC) form a C4-type zinc finger. Positions 145 to 193 (GSSASSTSSTPEVKPLKSLLGDSAPTLHLNKGTPSQSPVVGRSQGQQQE) are disordered. S167 bears the Phosphoserine mark. Residues 176 to 191 (GTPSQSPVVGRSQGQQ) show a composition bias toward polar residues. T177 bears the Phosphothreonine mark. Residues S181 and S362 each carry the phosphoserine modification. S367 is a glycosylation site (O-linked (GlcNAc) serine).

In terms of assembly, interacts with EPS15R and EPS15. Interacts with FCHO1. Post-translationally, O-glycosylated. In terms of tissue distribution, ubiquitously expressed.

Its subcellular location is the nucleus. The protein localises to the cytoplasmic vesicle. Its function is as follows. Required for vesicle docking or fusion during acrosome biogenesis. May play a role in RNA trafficking or localization. In case of infection by HIV-1, acts as a cofactor for viral Rev and promotes movement of Rev-responsive element-containing RNAs from the nuclear periphery to the cytoplasm. This step is essential for HIV-1 replication. The chain is Arf-GAP domain and FG repeat-containing protein 1 (AGFG1) from Homo sapiens (Human).